The following is a 735-amino-acid chain: Trafficking protein particle complex subunit 12 (735 aa).

Disordered stretches follow at residues Met-1 to Pro-204 and Asn-237 to Ser-276. A compositionally biased stretch (pro residues) spans Pro-13–Ala-22. Acidic residues predominate over residues Glu-34 to Thr-50. Residues Ser-109 and Ser-184 each carry the phosphoserine modification. 4 TPR repeats span residues Gly-545–Gln-578, Pro-580–Leu-613, Ile-620–Asn-653, and Ala-654–His-687.

In terms of assembly, component of the multisubunit TRAPP (transport protein particle) complex, which includes at least TRAPPC2, TRAPPC2L, TRAPPC3, TRAPPC3L, TRAPPC4, TRAPPC5, TRAPPC8, TRAPPC9, TRAPPC10, TRAPPC11 and TRAPPC12. Interacts with CENPE. Phosphorylated as the cells enter mitosis but is dephosphorylated at or before the onset of anaphase. The phosphorylated form recruits CENPE to kinetochores more efficiently than the non-phosphorylated form.

It is found in the endoplasmic reticulum-Golgi intermediate compartment. It localises to the nucleus. Component of the TRAPP complex, which is involved in endoplasmic reticulum to Golgi apparatus trafficking at a very early stage. Also plays a role in chromosome congression, kinetochore assembly and stability and controls the recruitment of CENPE to the kinetochores. This is Trafficking protein particle complex subunit 12 from Homo sapiens (Human).